Consider the following 406-residue polypeptide: ESX-5 secretion system protein EccE5 (406 aa).

Helical transmembrane passes span 9–29 and 43–63; these read LALSWPRVTAVFLVDVLILAV and VAWWVGVGVAAVVTLLSVVSY.

The protein belongs to the EccE family. As to quaternary structure, part of the ESX-5 / type VII secretion system (T7SS), which is composed of cytosolic and membrane components. The ESX-5 membrane complex is composed of EccB5, EccC5, EccD5 and EccE5.

The protein resides in the cell inner membrane. Functionally, part of the ESX-5 specialized secretion system, which is responsible for the secretion of EsxN and a number of PE_PGRS and PPE proteins, including PPE41. The chain is ESX-5 secretion system protein EccE5 from Mycobacterium tuberculosis (strain ATCC 25618 / H37Rv).